A 258-amino-acid polypeptide reads, in one-letter code: Acyl-[acyl-carrier-protein]--UDP-N-acetylglucosamine O-acyltransferase (258 aa).

It belongs to the transferase hexapeptide repeat family. LpxA subfamily. Homotrimer.

The protein resides in the cytoplasm. It catalyses the reaction a (3R)-hydroxyacyl-[ACP] + UDP-N-acetyl-alpha-D-glucosamine = a UDP-3-O-[(3R)-3-hydroxyacyl]-N-acetyl-alpha-D-glucosamine + holo-[ACP]. The protein operates within glycolipid biosynthesis; lipid IV(A) biosynthesis; lipid IV(A) from (3R)-3-hydroxytetradecanoyl-[acyl-carrier-protein] and UDP-N-acetyl-alpha-D-glucosamine: step 1/6. Involved in the biosynthesis of lipid A, a phosphorylated glycolipid that anchors the lipopolysaccharide to the outer membrane of the cell. The sequence is that of Acyl-[acyl-carrier-protein]--UDP-N-acetylglucosamine O-acyltransferase from Stutzerimonas stutzeri (strain A1501) (Pseudomonas stutzeri).